The chain runs to 250 residues: Homeobox protein Dlx4a (250 aa).

Positions 123-182 form a DNA-binding region, homeobox; it reads IRKPRTIYSSLQLQALNQRFQQTQYLALPERADLAAKLGLTQTQVKIWFQNKRSKYKKIM. Residues 182–202 form a disordered region; it reads MKHGSSGPEGEHLQAASASGA.

The protein belongs to the distal-less homeobox family.

The protein resides in the nucleus. This chain is Homeobox protein Dlx4a (dlx4a), found in Danio rerio (Zebrafish).